A 145-amino-acid polypeptide reads, in one-letter code: Nickel-responsive regulator (145 aa).

Ni(2+)-binding residues include H77, H88, H90, and C96.

This sequence belongs to the transcriptional regulatory CopG/NikR family. Homotetramer. It depends on Ni(2+) as a cofactor.

Transcriptional repressor of the nikABCDE operon. Is active in the presence of excessive concentrations of intracellular nickel. This chain is Nickel-responsive regulator, found in Edwardsiella ictaluri (strain 93-146).